Here is a 255-residue protein sequence, read N- to C-terminus: MISKFGSVHILAVVAIQLLIIPSVSSLNLTNAYLHHKCNNTEGKYSHGSAFEKYINLALRAIDSDNYLNGFAYIERGEDPNKVFVMYQCRGDSYGSKCKSCISAAISGLRRRCPKSKGAVIWYDQCLFEISTINSFNKIDYENDFYLSNPNDVNDKELFNKETSALLEELTNKATDKNNMIGNKFVLYAAGDKRIGTKNVYAMVQCTKDLVTTTSAACFEWIFKMFSKCCEGKQGGRVLGTSCNFRYELYPFLRN.

Positions 1-26 are cleaved as a signal peptide; that stretch reads MISKFGSVHILAVVAIQLLIIPSVSS. 2 Gnk2-homologous domains span residues 33-135 and 141-252; these read YLHH…TINS and YEND…LYPF.

The protein belongs to the cysteine-rich repeat secretory protein family.

It is found in the secreted. This Arabidopsis thaliana (Mouse-ear cress) protein is Putative cysteine-rich repeat secretory protein 27 (CRRSP27).